A 458-amino-acid polypeptide reads, in one-letter code: Elongation factor 1-alpha (458 aa).

At G2 the chain carries N,N,N-trimethylglycine. K3 is modified (N6,N6-dimethyllysine; alternate). N6-methyllysine; alternate is present on K3. In terms of domain architecture, tr-type G spans 5-240; it reads KTHVNVVVIG…DAIDPPQRPS (236 aa). The interval 14 to 21 is G1; it reads GHVDSGKS. 14–21 lines the GTP pocket; it reads GHVDSGKS. Residue K30 is modified to N6-methyllysine. A G2 region spans residues 70–74; sequence GITID. K79 is subject to N6,N6,N6-trimethyllysine. The G3 stretch occupies residues 91–94; it reads DAPG. GTP contacts are provided by residues 91 to 95 and 153 to 156; these read DAPGH and NKMD. A G4 region spans residues 153–156; sequence NKMD. The G5 stretch occupies residues 192 to 194; that stretch reads SGW. An N6,N6-dimethyllysine; alternate modification is found at K316. N6-methyllysine; alternate is present on K316. An N6-methyllysine modification is found at K390.

Belongs to the TRAFAC class translation factor GTPase superfamily. Classic translation factor GTPase family. EF-Tu/EF-1A subfamily.

It localises to the cytoplasm. Its function is as follows. This protein promotes the GTP-dependent binding of aminoacyl-tRNA to the A-site of ribosomes during protein biosynthesis. The sequence is that of Elongation factor 1-alpha (TEF-1) from Absidia glauca (Pin mould).